Reading from the N-terminus, the 349-residue chain is N-acetyltaurine hydrolase (349 aa).

Residues His-26, His-28, Glu-169, His-201, His-230, and Asp-298 each coordinate a divalent metal cation.

It belongs to the metallo-dependent hydrolases superfamily. Phosphotriesterase family. It depends on a divalent metal cation as a cofactor.

Its subcellular location is the cytoplasm. The protein resides in the cytosol. It carries out the reaction N-acetyltaurine + H2O = taurine + acetate. The enzyme catalyses N-propanoyltaurine + H2O = propanoate + taurine. It catalyses the reaction N-acetyl-L-methionine + H2O = L-methionine + acetate. The catalysed reaction is N-acetyl-L-isoleucine + H2O = L-isoleucine + acetate. It carries out the reaction N-acetyl-L-leucine + H2O = L-leucine + acetate. The enzyme catalyses N-acetyl-L-valine + H2O = L-valine + acetate. Its function is as follows. N-acetyltaurine hydrolase that regulates feeding by catalyzing the hydrolysis of N-acetyltaurine into taurine and acetate. N-acetyltaurine has anorexigenic and anti-obesity effects that are dependent on GFRAL receptor and GDF15. PTER also acts on other N-acetyl amino acids (Met, Ile, Leu, Val) and N-propionyltaurine, but at lower rates. In Pongo abelii (Sumatran orangutan), this protein is N-acetyltaurine hydrolase.